Here is a 327-residue protein sequence, read N- to C-terminus: Pumilio homolog 18 (327 aa).

The region spanning 1 to 324 (MAVADNPFSM…NIANILDSFR (324 aa)) is the PUM-HD domain. 6 Pumilio repeats span residues 79 to 114 (SDSD…FCAA), 115 to 149 (ILRR…ALYE), 150 to 185 (RILY…DQLL), 186 to 222 (ELVA…NIAV), 223 to 260 (NLYG…ELLG), and 261 to 295 (CDGD…DLFW).

The protein resides in the cytoplasm. Sequence-specific RNA-binding protein that regulates translation and mRNA stability by binding the 3'-UTR of target mRNAs. The polypeptide is Pumilio homolog 18 (APUM18) (Arabidopsis thaliana (Mouse-ear cress)).